A 622-amino-acid polypeptide reads, in one-letter code: Mitochondrial distribution and morphology protein 34 (622 aa).

In terms of domain architecture, SMP-LTD spans 1 to 195 (MAFNFNWSPL…LPAIIHRLSL (195 aa)). Disordered regions lie at residues 211–234 (QVTN…DPVD), 303–322 (PSGL…SHVA), 355–432 (SMGA…IRQP), 445–464 (ERNA…PASR), 482–546 (SLQQ…QTHL), and 581–622 (KMGG…AYRH). A compositionally biased stretch (low complexity) spans 214–225 (NPPLEGPGLDPL). Over residues 360 to 372 (RHSKAHARKRKKR) the composition is skewed to basic residues. Residues 373 to 384 (VVDLRRRPKNTD) show a composition bias toward basic and acidic residues. The span at 388–404 (SVSGESEFTESTSAASV) shows a compositional bias: low complexity. Polar residues-rich tracts occupy residues 482-495 (SLQQ…SKSL) and 522-532 (NASNYTSSGDS). Low complexity-rich tracts occupy residues 533–543 (QQQQQQQQQHQ) and 592–601 (NNKNDNKNNN).

The protein belongs to the MDM34 family. Component of the ER-mitochondria encounter structure (ERMES) or MDM complex, composed of MMM1, MDM10, MDM12 and MDM34.

The protein resides in the mitochondrion outer membrane. Functionally, component of the ERMES/MDM complex, which serves as a molecular tether to connect the endoplasmic reticulum (ER) and mitochondria. Components of this complex are involved in the control of mitochondrial shape and protein biogenesis, and function in nonvesicular lipid trafficking between the ER and mitochondria. MDM34 is required for the interaction of the ER-resident membrane protein MMM1 and the outer mitochondrial membrane-resident beta-barrel protein MDM10. This Ajellomyces capsulatus (strain G186AR / H82 / ATCC MYA-2454 / RMSCC 2432) (Darling's disease fungus) protein is Mitochondrial distribution and morphology protein 34.